Here is a 445-residue protein sequence, read N- to C-terminus: Ribosomal protein uS12 methylthiotransferase RimO (445 aa).

The MTTase N-terminal domain maps to 10–120 (PKVGFVSLGC…VVNAVHEVVP (111 aa)). [4Fe-4S] cluster is bound by residues cysteine 19, cysteine 55, cysteine 84, cysteine 153, cysteine 157, and cysteine 160. The Radical SAM core domain maps to 139 to 378 (LTPRHYAYLK…AHQQAISSAR (240 aa)). The region spanning 380 to 445 (QLRIGREIEV…DEYDLWAEQI (66 aa)) is the TRAM domain.

It belongs to the methylthiotransferase family. RimO subfamily. [4Fe-4S] cluster is required as a cofactor.

The protein localises to the cytoplasm. The catalysed reaction is L-aspartate(89)-[ribosomal protein uS12]-hydrogen + (sulfur carrier)-SH + AH2 + 2 S-adenosyl-L-methionine = 3-methylsulfanyl-L-aspartate(89)-[ribosomal protein uS12]-hydrogen + (sulfur carrier)-H + 5'-deoxyadenosine + L-methionine + A + S-adenosyl-L-homocysteine + 2 H(+). Catalyzes the methylthiolation of an aspartic acid residue of ribosomal protein uS12. The chain is Ribosomal protein uS12 methylthiotransferase RimO from Pseudomonas fluorescens (strain Pf0-1).